The primary structure comprises 275 residues: Phosphonoacetaldehyde hydrolase (275 aa).

The active-site Nucleophile is D15. D15 and A17 together coordinate Mg(2+). The active-site Schiff-base intermediate with substrate is K56. D189 contributes to the Mg(2+) binding site.

The protein belongs to the HAD-like hydrolase superfamily. PhnX family. Homodimer. Mg(2+) is required as a cofactor.

The catalysed reaction is phosphonoacetaldehyde + H2O = acetaldehyde + phosphate + H(+). Its function is as follows. Involved in phosphonate degradation. The sequence is that of Phosphonoacetaldehyde hydrolase from Pseudomonas putida (Arthrobacter siderocapsulatus).